Reading from the N-terminus, the 688-residue chain is Translation initiation factor IF-2 (688 aa).

The segment covering 50-62 (LLSGKEKSEKTKE) has biased composition (basic and acidic residues). The tract at residues 50–95 (LLSGKEKSEKTKEEDDEIETTAKNPIKESINNKKSNKRDDKNEKVN) is disordered. Residues 72-82 (KNPIKESINNK) show a composition bias toward low complexity. Residues 86–95 (KRDDKNEKVN) show a composition bias toward basic and acidic residues. A tr-type G domain is found at 187 to 354 (KRSPIITVMG…MILLSSEILE (168 aa)). The tract at residues 196-203 (GHVDHGKT) is G1. 196 to 203 (GHVDHGKT) is a binding site for GTP. A G2 region spans residues 221-225 (GITQH). A G3 region spans residues 242–245 (DTPG). GTP-binding positions include 242–246 (DTPGH) and 296–299 (NKID). Residues 296 to 299 (NKID) are G4. The tract at residues 332–334 (SAH) is G5.

It belongs to the TRAFAC class translation factor GTPase superfamily. Classic translation factor GTPase family. IF-2 subfamily.

The protein localises to the cytoplasm. In terms of biological role, one of the essential components for the initiation of protein synthesis. Protects formylmethionyl-tRNA from spontaneous hydrolysis and promotes its binding to the 30S ribosomal subunits. Also involved in the hydrolysis of GTP during the formation of the 70S ribosomal complex. The chain is Translation initiation factor IF-2 from Clostridium botulinum (strain Langeland / NCTC 10281 / Type F).